Consider the following 155-residue polypeptide: 3-hydroxyacyl-[acyl-carrier-protein] dehydratase FabZ (155 aa).

Residue His58 is part of the active site.

The protein belongs to the thioester dehydratase family. FabZ subfamily.

It localises to the cytoplasm. The catalysed reaction is a (3R)-hydroxyacyl-[ACP] = a (2E)-enoyl-[ACP] + H2O. Its function is as follows. Involved in unsaturated fatty acids biosynthesis. Catalyzes the dehydration of short chain beta-hydroxyacyl-ACPs and long chain saturated and unsaturated beta-hydroxyacyl-ACPs. The protein is 3-hydroxyacyl-[acyl-carrier-protein] dehydratase FabZ of Rhizobium etli (strain CIAT 652).